We begin with the raw amino-acid sequence, 157 residues long: Small ribosomal subunit protein uS7 (157 aa).

Belongs to the universal ribosomal protein uS7 family. As to quaternary structure, part of the 30S ribosomal subunit. Contacts proteins S9 and S11.

One of the primary rRNA binding proteins, it binds directly to 16S rRNA where it nucleates assembly of the head domain of the 30S subunit. Is located at the subunit interface close to the decoding center, probably blocks exit of the E-site tRNA. The polypeptide is Small ribosomal subunit protein uS7 (Salinibacter ruber (strain DSM 13855 / M31)).